A 118-amino-acid polypeptide reads, in one-letter code: Large ribosomal subunit protein uL22 (118 aa).

Belongs to the universal ribosomal protein uL22 family. As to quaternary structure, part of the 50S ribosomal subunit.

In terms of biological role, this protein binds specifically to 23S rRNA; its binding is stimulated by other ribosomal proteins, e.g. L4, L17, and L20. It is important during the early stages of 50S assembly. It makes multiple contacts with different domains of the 23S rRNA in the assembled 50S subunit and ribosome. Functionally, the globular domain of the protein is located near the polypeptide exit tunnel on the outside of the subunit, while an extended beta-hairpin is found that lines the wall of the exit tunnel in the center of the 70S ribosome. The chain is Large ribosomal subunit protein uL22 from Synechococcus sp. (strain RCC307).